A 606-amino-acid polypeptide reads, in one-letter code: Limonene synthase, chloroplastic (606 aa).

A chloroplast-targeting transit peptide spans 1 to 38 (MAIINLPVPTNSSSEVNKHNHLRSCLPSGRATFTTLSA). 5 residues coordinate (2E)-geranyl diphosphate: Arg-320, Asp-357, Asp-361, Arg-497, and Asp-500. Positions 357 and 361 each coordinate Mg(2+). The DDXXD motif motif lies at 357 to 361 (DDIYD). Mg(2+) contacts are provided by Asp-500, Thr-504, and Glu-508.

It belongs to the terpene synthase family. Tpsb subfamily. Monomer. Mg(2+) serves as cofactor. Mn(2+) is required as a cofactor. Confined to fruits.

The protein localises to the plastid. It localises to the chloroplast. It carries out the reaction (2E,6E)-farnesyl diphosphate = (E)-beta-farnesene + diphosphate. The enzyme catalyses (2E)-geranyl diphosphate = limonene + diphosphate. It catalyses the reaction (2E)-geranyl diphosphate = beta-pinene + diphosphate. The catalysed reaction is (2E)-geranyl diphosphate = sabinene + diphosphate. It carries out the reaction (2E)-geranyl diphosphate = beta-myrcene + diphosphate. The enzyme catalyses (2E)-geranyl diphosphate = alpha-pinene + diphosphate. It catalyses the reaction (2E)-geranyl diphosphate = terpinolene + diphosphate. Its pathway is secondary metabolite biosynthesis; terpenoid biosynthesis. Functionally, monoterpene synthase (mono-TPS) involved in the biosynthesis of monoterpenes natural products, constituent of coffee beverage aroma. Catalyzes the conversion of (2E)-geranyl diphosphate (GPP) into limonene, beta-pinene, sabinene and beta-myrcene, and, as minor products, alpha-pinene and alpha-terpinolene. Can also, with a low efficiency, use farnesyl pyrophosphate (FPP) as substrate to produce beta-farnesene. Not able to use geranylgeranyl pyrophosphate (GGPP) as substrate. The protein is Limonene synthase, chloroplastic of Coffea arabica (Arabian coffee).